A 2179-amino-acid chain; its full sequence is Genome polyprotein (2179 aa).

4 disordered regions span residues 503–531 (FSKD…PTGD), 623–678 (QPQK…YPIQ), 703–738 (RAKK…GDQF), and 753–847 (EPSV…PPKM). Polar residues-rich tracts occupy residues 630–642 (DTPS…QPFH) and 659–678 (TTFA…YPIQ). Residues 758 to 770 (SEDTSSQSYISTE) are compositionally biased toward polar residues. A compositionally biased stretch (low complexity) spans 783-806 (SEESTQLSQLSSSSNDSPENNENT). Positions 819–831 (EISEVEDEVDGMT) are enriched in acidic residues. The CCHC-type zinc-finger motif lies at 1112 to 1125 (CFTCGKIGHFSRNC). Residue Asp1226 is the For protease activity; shared with dimeric partner of the active site. A Reverse transcriptase domain is found at 1409–1591 (QQFDLIEPSD…NKIQFLGMDF (183 aa)). Mg(2+) contacts are provided by Asp1479, Asp1542, and Asp1543. 3 disordered regions span residues 1822 to 1848 (QRRT…KLSH), 2114 to 2144 (NIVK…KNKC), and 2160 to 2179 (YSTK…EPCV). Positions 1827 to 1840 (SSSTKSKADSSQST) are enriched in low complexity. The segment covering 2120–2144 (PRKRKGKAKSRSSTRSEKRRAKNKC) has biased composition (basic residues). Residues 2162 to 2179 (TKPSTPSWTQDSSSEPCV) show a composition bias toward polar residues.

This sequence belongs to the Petuviruses genome polyprotein family.

The enzyme catalyses DNA(n) + a 2'-deoxyribonucleoside 5'-triphosphate = DNA(n+1) + diphosphate. Its function is as follows. Encodes presumably for at least four polypeptides: Movement protein (MP), capsid protein (CP), Protease (PR), and reverse transcriptase (RT). The polypeptide is Genome polyprotein (Petunia vein clearing virus (isolate Shepherd) (PVCV)).